We begin with the raw amino-acid sequence, 560 residues long: Vanillyl-alcohol oxidase (560 aa).

The FAD-binding PCMH-type domain maps to 67–272 (DYFLASAIVA…TKIGIWLMPN (206 aa)). Tyr108 is a catalytic residue. The residue at position 422 (His422) is a Tele-8alpha-FAD histidine. Active-site residues include Tyr503 and Arg504.

To bacterial flavocytochrome p-cresol methyl hydroxylase. As to quaternary structure, homooctamer (tetramer of tightly interacting dimers). It depends on FAD as a cofactor.

It is found in the peroxisome. It localises to the cytoplasm. The catalysed reaction is 4-hydroxy-3-methoxy-benzenemethanol + O2 = vanillin + H2O2. Competitively inhibited by cinnamyl and coniferyl alcohols and by isoeugenol. Catalyzes the conversion of vanillin alcohol to vanillin, and also the conversion of a wide range of phenolic compounds bearing side chains of variable size at the para position of the aromatic ring. Crucial for the degradation of the secondary metabolites derived from the degradation of the lignin. Catalyzes besides the oxidation of 4-hydroxybenzyl alcohols, the oxidative deamination of 4-hydroxybenzylamines, the oxidative demethylation of 4-(methoxy-methyl)phenols and the oxidative hydration of 4-allylphenols. Most active with 4-allylphenols. In Penicillium simplicissimum, this protein is Vanillyl-alcohol oxidase (VAOA).